A 194-amino-acid polypeptide reads, in one-letter code: Imidazoleglycerol-phosphate dehydratase (194 aa).

It belongs to the imidazoleglycerol-phosphate dehydratase family.

Its subcellular location is the cytoplasm. The catalysed reaction is D-erythro-1-(imidazol-4-yl)glycerol 3-phosphate = 3-(imidazol-4-yl)-2-oxopropyl phosphate + H2O. It participates in amino-acid biosynthesis; L-histidine biosynthesis; L-histidine from 5-phospho-alpha-D-ribose 1-diphosphate: step 6/9. In Limosilactobacillus fermentum (strain NBRC 3956 / LMG 18251) (Lactobacillus fermentum), this protein is Imidazoleglycerol-phosphate dehydratase.